The following is a 451-amino-acid chain: MRECISIHVGQAGVQIGNACWELYCLEHGIQPDGQMPSDKTIGGGDDSFNTFFSETGAGKHVPRAVFVDLEPTVIDEVRTGTYRQLFHPEQLITGKEDAANNYARGHYTIGKEIIDLVLDRIRKLADQCTGLQGFLVFHSFGGGTGSGFTSLLMERLSVDYGKKSKLEFSIYPAPQVSTAVVEPYNSILTTHTTLEHSDCAFMVDNEAIYDICRRNLDIERPTYTNLNRLIGQIVSSITASLRFDGALNVDLTEFQTNLVPYPRIHFPLATYAPVISAEKAYHEQLSVAEITNACFEPANQMVKCDPRHGKYMACCLLYRGDVVPKDVNAAIATIKTKRTIQFVDWCPTGFKVGINYQPPTVVPGGDLAKVQRAVCMLSNTTAIAEAWARLDHKFDLMYAKRAFVHWYVGEGMEEGEFSEAREDMAALEKDYEEVGVDSVEGEGEEEGEEY.

Residues 1-4 (MREC) carry the MREC motif motif. GTP-binding residues include Q11, E71, S140, G144, T145, T179, N206, and N228. E71 contacts Mg(2+). Residue E254 is part of the active site. A disordered region spans residues 432 to 451 (YEEVGVDSVEGEGEEEGEEY). E445 is subject to 5-glutamyl polyglutamate.

It belongs to the tubulin family. In terms of assembly, dimer of alpha and beta chains. A typical microtubule is a hollow water-filled tube with an outer diameter of 25 nm and an inner diameter of 15 nM. Alpha-beta heterodimers associate head-to-tail to form protofilaments running lengthwise along the microtubule wall with the beta-tubulin subunit facing the microtubule plus end conferring a structural polarity. Microtubules usually have 13 protofilaments but different protofilament numbers can be found in some organisms and specialized cells. It depends on Mg(2+) as a cofactor. Some glutamate residues at the C-terminus are polyglycylated, resulting in polyglycine chains on the gamma-carboxyl group. Glycylation is mainly limited to tubulin incorporated into axonemes (cilia and flagella) whereas glutamylation is prevalent in neuronal cells, centrioles, axonemes, and the mitotic spindle. Both modifications can coexist on the same protein on adjacent residues, and lowering polyglycylation levels increases polyglutamylation, and reciprocally. The precise function of polyglycylation is still unclear. In terms of processing, some glutamate residues at the C-terminus are polyglutamylated, resulting in polyglutamate chains on the gamma-carboxyl group. Polyglutamylation plays a key role in microtubule severing by spastin (SPAST). SPAST preferentially recognizes and acts on microtubules decorated with short polyglutamate tails: severing activity by SPAST increases as the number of glutamates per tubulin rises from one to eight, but decreases beyond this glutamylation threshold. Post-translationally, undergoes a tyrosination/detyrosination cycle, the cyclic removal and re-addition of a C-terminal tyrosine residue by the enzymes tubulin tyrosine carboxypeptidase (MATCAP1, VASH1 or VASH2) and tubulin tyrosine ligase (TTL), respectively. Tyrosination promotes microtubule interaction with CAP-Gly microtubule plus-end tracking proteins. Tyrosinated tubulins regulate the initiation of dynein-driven motility. In terms of processing, detyrosination is involved in metaphase plate congression by guiding chromosomes during mitosis. Detyrosination increases microtubules-dependent mechanotransduction in dystrophic cardiac and skeletal muscle. In cardiomyocytes, detyrosinated microtubules are required to resist to contractile compression during contraction.

Its subcellular location is the cytoplasm. It localises to the cytoskeleton. It carries out the reaction GTP + H2O = GDP + phosphate + H(+). Functionally, tubulin is the major constituent of microtubules, a cylinder consisting of laterally associated linear protofilaments composed of alpha- and beta-tubulin heterodimers. Microtubules grow by the addition of GTP-tubulin dimers to the microtubule end, where a stabilizing cap forms. Below the cap, tubulin dimers are in GDP-bound state, owing to GTPase activity of alpha-tubulin. The protein is Tubulin alpha-1A chain (TUBA1A) of Gallus gallus (Chicken).